The following is a 577-amino-acid chain: Pentatricopeptide repeat-containing protein At1g06143 (577 aa).

PPR repeat units lie at residues 59 to 89 (DCRL…MQEP), 90 to 124 (NVFV…SVSP), 125 to 155 (SSYT…KFGF), 158 to 192 (HVKI…DDIA), 193 to 219 (WTTM…MSEK), 220 to 250 (NEAT…MPVK), 251 to 285 (DIIS…GIIP), 286 to 320 (DEVT…GFVL), 321 to 351 (DVYI…LPKK), 352 to 386 (NLFC…SVKP), 387 to 417 (NAVT…MIDD), and 423 to 453 (NVEH…MEFE). Residues 458 to 534 (IWGALLDGCR…CPGTSSIRID (77 aa)) are type E motif. The interval 535 to 565 (KRDHLFAAADKSHSASDEVCLLLDEIYDQMG) is type E(+) motif.

Belongs to the PPR family. PCMP-E subfamily.

In Arabidopsis thaliana (Mouse-ear cress), this protein is Pentatricopeptide repeat-containing protein At1g06143 (EMB1444).